The chain runs to 596 residues: Elongation factor 4 (596 aa).

The tr-type G domain occupies 2-184 (KHIRNFSIIA…MIVKDVPPPV (183 aa)). Residues 14 to 19 (DHGKST) and 131 to 134 (NKID) each bind GTP.

Belongs to the TRAFAC class translation factor GTPase superfamily. Classic translation factor GTPase family. LepA subfamily.

It localises to the cell inner membrane. The catalysed reaction is GTP + H2O = GDP + phosphate + H(+). Required for accurate and efficient protein synthesis under certain stress conditions. May act as a fidelity factor of the translation reaction, by catalyzing a one-codon backward translocation of tRNAs on improperly translocated ribosomes. Back-translocation proceeds from a post-translocation (POST) complex to a pre-translocation (PRE) complex, thus giving elongation factor G a second chance to translocate the tRNAs correctly. Binds to ribosomes in a GTP-dependent manner. The polypeptide is Elongation factor 4 (Pseudoalteromonas translucida (strain TAC 125)).